The following is a 225-amino-acid chain: MKAFIVRVLLIFIGAILLIQLWIFSSLVWWRTHEVDTTMFMRIDYWSDPSEPIIHEWLDYDDISDNFKHAILAGEDAKFIHHHGFDWDGIRFALERNNEQGEVVAGGSTVSQQLAKNLFLYNKRSFIRKGQETVATWMMERMWSKRRILEVYMNSVEFGKNLYGVEAAAQYYYGKSAKSLTREQAAFLAALLPDPKYYQDHRNDRKLQYRKRVILRYMNSTQIPE.

The helical transmembrane segment at 8–28 (VLLIFIGAILLIQLWIFSSLV) threads the bilayer.

This sequence belongs to the glycosyltransferase 51 family.

It localises to the cell inner membrane. The catalysed reaction is [GlcNAc-(1-&gt;4)-Mur2Ac(oyl-L-Ala-gamma-D-Glu-L-Lys-D-Ala-D-Ala)](n)-di-trans,octa-cis-undecaprenyl diphosphate + beta-D-GlcNAc-(1-&gt;4)-Mur2Ac(oyl-L-Ala-gamma-D-Glu-L-Lys-D-Ala-D-Ala)-di-trans,octa-cis-undecaprenyl diphosphate = [GlcNAc-(1-&gt;4)-Mur2Ac(oyl-L-Ala-gamma-D-Glu-L-Lys-D-Ala-D-Ala)](n+1)-di-trans,octa-cis-undecaprenyl diphosphate + di-trans,octa-cis-undecaprenyl diphosphate + H(+). It functions in the pathway cell wall biogenesis; peptidoglycan biosynthesis. In terms of biological role, peptidoglycan polymerase that catalyzes glycan chain elongation from lipid-linked precursors. This chain is Biosynthetic peptidoglycan transglycosylase, found in Acinetobacter baumannii (strain ACICU).